A 686-amino-acid chain; its full sequence is Putative pentatricopeptide repeat-containing protein At3g49142 (686 aa).

PPR repeat units lie at residues 73-103 (NSSL…IPER), 104-138 (NVII…NVRP), 139-173 (DHYT…GLSS), 174-204 (TLFV…MSRR), 205-239 (DVVS…KISH), 240-272 (DAGT…MGKK), 273-307 (SLVS…GFEP), 308-342 (DAVS…KLIP), 343-373 (NLLL…MKSR), 374-408 (DVVS…GLVP), 409-439 (DSIA…MTDH), and 445-475 (RLEH…MSME). The interval 480-555 (VWGALLGACR…NPGASNVEVN (76 aa)) is type E motif. The interval 556–586 (RIIHTFLVGDRSHPQSDEIYRELDVLVKKMK) is type E(+) motif. The type DYW motif stretch occupies residues 587 to 686 (ELGYVPDSES…FGVCSCGDYW (100 aa)).

This sequence belongs to the PPR family. PCMP-H subfamily.

The sequence is that of Putative pentatricopeptide repeat-containing protein At3g49142 (PCMP-H77) from Arabidopsis thaliana (Mouse-ear cress).